The sequence spans 304 residues: Protein transport protein sec13 (304 aa).

WD repeat units follow at residues G12–V51, G56–I97, L102–N143, A147–K203, G211–W253, and N259–N298.

It belongs to the WD repeat SEC13 family. In terms of assembly, the COPII coat is composed of at least 5 proteins: the sec23/24 complex, the sec13/31 complex, and the protein vtr-7/sar1. Component of the nuclear pore complex (NPC). NPC constitutes the exclusive means of nucleocytoplasmic transport. NPCs allow the passive diffusion of ions and small molecules and the active, nuclear transport receptor-mediated bidirectional transport of macromolecules such as proteins, RNAs, ribonucleoparticles (RNPs), and ribosomal subunits across the nuclear envelope. Due to its 8-fold rotational symmetry, all subunits are present with 8 copies or multiples thereof.

The protein resides in the cytoplasmic vesicle. It is found in the COPII-coated vesicle membrane. The protein localises to the endoplasmic reticulum membrane. It localises to the nucleus. Its subcellular location is the nuclear pore complex. Component of the coat protein complex II (COPII) which promotes the formation of transport vesicles from the endoplasmic reticulum (ER). The coat has two main functions, the physical deformation of the endoplasmic reticulum membrane into vesicles and the selection of cargo molecules. It also functions as a component of the nuclear pore complex (NPC). NPC components, collectively referred to as nucleoporins (NUPs), can play the role of both NPC structural components and of docking or interaction partners for transiently associated nuclear transport factors. Nup-20/sec13 is required for efficient mRNA export from the nucleus to the cytoplasm and for correct nuclear pore biogenesis and distribution. The chain is Protein transport protein sec13 (nup-20) from Neurospora crassa (strain ATCC 24698 / 74-OR23-1A / CBS 708.71 / DSM 1257 / FGSC 987).